We begin with the raw amino-acid sequence, 188 residues long: Pyridoxal 5'-phosphate synthase subunit PdxT (188 aa).

Residue 46–48 (GES) participates in L-glutamine binding. Cys78 acts as the Nucleophile in catalysis. L-glutamine contacts are provided by residues Arg105 and 134-135 (IR). Catalysis depends on charge relay system residues His170 and Glu172.

The protein belongs to the glutaminase PdxT/SNO family. In terms of assembly, in the presence of PdxS, forms a dodecamer of heterodimers. Only shows activity in the heterodimer.

The catalysed reaction is aldehydo-D-ribose 5-phosphate + D-glyceraldehyde 3-phosphate + L-glutamine = pyridoxal 5'-phosphate + L-glutamate + phosphate + 3 H2O + H(+). It carries out the reaction L-glutamine + H2O = L-glutamate + NH4(+). It participates in cofactor biosynthesis; pyridoxal 5'-phosphate biosynthesis. Functionally, catalyzes the hydrolysis of glutamine to glutamate and ammonia as part of the biosynthesis of pyridoxal 5'-phosphate. The resulting ammonia molecule is channeled to the active site of PdxS. This is Pyridoxal 5'-phosphate synthase subunit PdxT from Thermotoga maritima (strain ATCC 43589 / DSM 3109 / JCM 10099 / NBRC 100826 / MSB8).